The sequence spans 237 residues: Probable glutathione-independent glyoxalase SNO4 (237 aa).

Residues Cys138, His139, and Glu170 contribute to the active site.

Belongs to the peptidase C56 family. HSP31-like subfamily. In terms of assembly, homodimer.

The protein localises to the cytoplasm. It localises to the P-body. It catalyses the reaction methylglyoxal + H2O = (R)-lactate + H(+). Its function is as follows. Catalyzes the conversion of methylglyoxal (MG) to D-lactate in a single glutathione (GSH)-independent step. May play a role in detoxifying endogenously produced glyoxals. Involved in protection against reactive oxygen species (ROS). Important for viability in stationary phase. May negatively regulate TORC1 in response to nutrient limitation. The sequence is that of Probable glutathione-independent glyoxalase SNO4 from Saccharomyces cerevisiae (strain ATCC 204508 / S288c) (Baker's yeast).